The primary structure comprises 514 residues: CBL-interacting protein kinase 25 (514 aa).

The region spanning 21 to 281 (YEFGPLVGEG…IPEIMEMRWF (261 aa)) is the Protein kinase domain. ATP is bound by residues 27–35 (VGEGNFAKV) and Lys-50. Asp-149 serves as the catalytic Proton acceptor. The interval 167 to 196 (DFGLSALADMERREAHLQTVCGTPLFLAPE) is activation loop. A disordered region spans residues 303–340 (GLDGEPELYDSDTDTIESSSSSESPTPVAGTPRGMHTS). The segment covering 304–317 (LDGEPELYDSDTDT) has biased composition (acidic residues). Residues 318–329 (IESSSSSESPTP) show a composition bias toward low complexity. An NAF domain is found at 323-395 (SSESPTPVAG…PSFDLSGLFE (73 aa)). The segment at 398-427 (GERMRFVSGAPVADIIAKLQEIAGMVSFTA) is PPI.

This sequence belongs to the protein kinase superfamily. CAMK Ser/Thr protein kinase family. SNF1 subfamily. The cofactor is Mn(2+).

The catalysed reaction is L-seryl-[protein] + ATP = O-phospho-L-seryl-[protein] + ADP + H(+). The enzyme catalyses L-threonyl-[protein] + ATP = O-phospho-L-threonyl-[protein] + ADP + H(+). In terms of biological role, CIPK serine-threonine protein kinases interact with CBL proteins. Binding of a CBL protein to the regulatory NAF domain of CIPK protein lead to the activation of the kinase in a calcium-dependent manner. The protein is CBL-interacting protein kinase 25 (CIPK25) of Oryza sativa subsp. japonica (Rice).